The primary structure comprises 52 residues: Small ribosomal subunit protein uS14 (52 aa).

Zn(2+)-binding residues include C17, C20, C35, and C38.

The protein belongs to the universal ribosomal protein uS14 family. Zinc-binding uS14 subfamily. Part of the 30S ribosomal subunit. The cofactor is Zn(2+).

Its function is as follows. Binds 16S rRNA, required for the assembly of 30S particles. The protein is Small ribosomal subunit protein uS14 of Halobacterium salinarum (strain ATCC 700922 / JCM 11081 / NRC-1) (Halobacterium halobium).